The primary structure comprises 273 residues: Non-homologous end joining protein Ku (273 aa).

The region spanning 10-193 (AFGLVNVPVK…KVEIKPAELK (184 aa)) is the Ku domain. The tract at residues 111–273 (FLEPDSKSSK…KANSNVPTPP (163 aa)) is sufficient for interaction with LigD.

Belongs to the prokaryotic Ku family. In terms of assembly, homodimer. Interacts with LigD.

Its function is as follows. With LigD forms a non-homologous end joining (NHEJ) DNA repair enzyme, which repairs dsDNA breaks with reduced fidelity. Binds linear dsDNA with 5'- and 3'- overhangs but not closed circular dsDNA nor ssDNA. Recruits and stimulates the ligase activity of LigD. In Mycobacterium tuberculosis (strain CDC 1551 / Oshkosh), this protein is Non-homologous end joining protein Ku (mku).